A 372-amino-acid chain; its full sequence is Prostaglandin E synthase 2 (372 aa).

Over 1–54 (MAHAVRALWPHGRALAWRLGDRPALGLHAQSRAGFTGAAGGSGPAATARKGGPR) the chain is Lumenal. The helical transmembrane segment at 55-71 (LLGAAALALGGALGLYH) threads the bilayer. At 72–372 (TARWHLRAQD…VEKAIAEAPQ (301 aa)) the chain is on the cytoplasmic side. Residues 87–190 (SATQLSLSSR…DIITYYPPMK (104 aa)) enclose the Glutaredoxin domain. Position 92 is a phosphoserine (Ser92). Glutathione is bound by residues Val145 and 161–162 (DS). Residues 259–372 (DYIVKEGNFG…VEKAIAEAPQ (114 aa)) form the GST C-terminal domain.

Belongs to the GST superfamily. As to quaternary structure, may interact with CEBPB. Interacts with EXOSC10. Homodimer. Synthesized as a Golgi membrane-associated protein, and the proteolytic removal of the N-terminal hydrophobic domain leads to the formation of a mature cytosolic enzyme. As to expression, detected in heart (at protein level). Widely expressed. Expressed in heart &gt; kidney &gt; muscle &gt; testis &gt; endometrium = ovary &gt; myometrium = spleen = lung. In endometrium, it is mainly expressed in luminal epithelial cells followed by glandular epithelial cells, but expression is also present in stromal cells at a lower level.

The protein localises to the microsome membrane. It localises to the cytoplasm. It carries out the reaction prostaglandin H2 = prostaglandin E2. It catalyses the reaction prostaglandin H2 = (12S)-hydroxy-(5Z,8E,10E)-heptadecatrienoate + malonaldehyde. It participates in lipid metabolism; prostaglandin biosynthesis. Isomerase activity is increased by sulfhydril compounds. Dithiothreitol (DTT) is most effective, followed by glutathione (GSH) and 2-mercaptoethanol. Functionally, isomerase that catalyzes the conversion of PGH2 into the more stable prostaglandin E2 (PGE2) (in vitro). The biological function and the GSH-dependent property of PTGES2 is still under debate. In vivo, PTGES2 could form a complex with GSH and heme and would not participate in PGE2 synthesis but would catalyze the degradation of prostaglandin E2 H2 (PGH2) to 12(S)-hydroxy-5(Z),8(E),10(E)-heptadecatrienoic acid (HHT) and malondialdehyde (MDA). In Bos taurus (Bovine), this protein is Prostaglandin E synthase 2 (PTGES2).